A 292-amino-acid polypeptide reads, in one-letter code: Trimeric intracellular cation channel type B (292 aa).

The Lumenal segment spans residues 1–16 (MEYPWDDLTLAFSRTS). The chain crosses the membrane as a helical span at residues 17-34 (MFPFFDIAHYLVSVMALK). The Cytoplasmic segment spans residues 35-47 (QRPGAVAAAWNNP). The helical transmembrane segment at 48–69 (LASWLSAMLHCFGGGILSCMLL) threads the bilayer. The Lumenal segment spans residues 70-82 (AESPLKFLTNHTN). The chain crosses the membrane as a helical span at residues 83-100 (ILLASSIWYIVFFCPRDL). At 101–103 (VSQ) the chain is on the cytoplasmic side. A helical transmembrane segment spans residues 104-122 (GYSYQPIQFLAAGMKEVTR). Residues Lys118 and Arg122 each coordinate a 1,2-diacyl-sn-glycero-3-phospho-(1D-myo-inositol-4,5-bisphosphate). The Lumenal segment spans residues 123–140 (TWKIVGGVSDANSYYRNA). A helical membrane pass occupies residues 141 to 158 (WIVMIVVGWARGAGGAVV). Over 159-178 (TACEQLLKGDWKPEGDEWLK) the chain is Cytoplasmic. The helical transmembrane segment at 179 to 195 (MSFPCKITLLGSIMFTF) threads the bilayer. Over 196 to 206 (QHTRHLAISKH) the chain is Lumenal. The chain crosses the membrane as a helical span at residues 207 to 225 (DLMFLYTIFLVTIKVTMMM). Residues 226 to 292 (TKDTAVTLTP…GAKRHAKKED (67 aa)) lie on the Cytoplasmic side of the membrane. Positions 248–292 (RQQQQFSSSEKKTEVKPSSNGSASSASKRGAEPSGGAKRHAKKED) are disordered. Positions 265-274 (SSNGSASSAS) are enriched in low complexity.

The protein belongs to the TMEM38 family. In terms of assembly, homotrimer; conformation seems to be controled by binding to diacylglycerol (DAG). In terms of tissue distribution, widely expressed.

It localises to the endoplasmic reticulum membrane. It carries out the reaction K(+)(in) = K(+)(out). Its activity is regulated as follows. Channel activity is activated by increased cytosolic Ca(2+) levels and blocked by luminal high Ca(2+) levels. Its function is as follows. Intracellular monovalent cation channel required for maintenance of rapid intracellular calcium release. Acts as a potassium counter-ion channel that functions in synchronization with calcium release from intracellular stores. Activated by increased cytosolic Ca(2+) levels. This chain is Trimeric intracellular cation channel type B (Tmem38b), found in Mus musculus (Mouse).